The following is a 304-amino-acid chain: Ribosomal protein L11 methyltransferase (304 aa).

4 residues coordinate S-adenosyl-L-methionine: Thr155, Gly176, Asp198, and Asn239.

The protein belongs to the methyltransferase superfamily. PrmA family.

It localises to the cytoplasm. The catalysed reaction is L-lysyl-[protein] + 3 S-adenosyl-L-methionine = N(6),N(6),N(6)-trimethyl-L-lysyl-[protein] + 3 S-adenosyl-L-homocysteine + 3 H(+). In terms of biological role, methylates ribosomal protein L11. This chain is Ribosomal protein L11 methyltransferase, found in Caldicellulosiruptor bescii (strain ATCC BAA-1888 / DSM 6725 / KCTC 15123 / Z-1320) (Anaerocellum thermophilum).